We begin with the raw amino-acid sequence, 338 residues long: Ketol-acid reductoisomerase (NADP(+)) (338 aa).

The KARI N-terminal Rossmann domain maps to 1 to 181 (MQVYYDKDCD…GGGRSGIIET (181 aa)). Residues 24–27 (YGSQ), arginine 47, serine 50, serine 52, and 82–85 (DEFQ) contribute to the NADP(+) site. Histidine 107 is a catalytic residue. Glycine 133 serves as a coordination point for NADP(+). The KARI C-terminal knotted domain maps to 182-327 (TFKDETETDL…GKLRAMMPWI (146 aa)). Mg(2+) contacts are provided by aspartate 190, glutamate 194, glutamate 226, and glutamate 230. Residue serine 251 participates in substrate binding.

Belongs to the ketol-acid reductoisomerase family. Mg(2+) serves as cofactor.

It carries out the reaction (2R)-2,3-dihydroxy-3-methylbutanoate + NADP(+) = (2S)-2-acetolactate + NADPH + H(+). It catalyses the reaction (2R,3R)-2,3-dihydroxy-3-methylpentanoate + NADP(+) = (S)-2-ethyl-2-hydroxy-3-oxobutanoate + NADPH + H(+). It functions in the pathway amino-acid biosynthesis; L-isoleucine biosynthesis; L-isoleucine from 2-oxobutanoate: step 2/4. The protein operates within amino-acid biosynthesis; L-valine biosynthesis; L-valine from pyruvate: step 2/4. Involved in the biosynthesis of branched-chain amino acids (BCAA). Catalyzes an alkyl-migration followed by a ketol-acid reduction of (S)-2-acetolactate (S2AL) to yield (R)-2,3-dihydroxy-isovalerate. In the isomerase reaction, S2AL is rearranged via a Mg-dependent methyl migration to produce 3-hydroxy-3-methyl-2-ketobutyrate (HMKB). In the reductase reaction, this 2-ketoacid undergoes a metal-dependent reduction by NADPH to yield (R)-2,3-dihydroxy-isovalerate. The protein is Ketol-acid reductoisomerase (NADP(+)) of Saccharophagus degradans (strain 2-40 / ATCC 43961 / DSM 17024).